Consider the following 147-residue polypeptide: Large ribosomal subunit protein uL16 (147 aa).

It belongs to the universal ribosomal protein uL16 family. As to quaternary structure, part of the 50S ribosomal subunit.

Its function is as follows. Binds 23S rRNA and is also seen to make contacts with the A and possibly P site tRNAs. The chain is Large ribosomal subunit protein uL16 from Caldicellulosiruptor bescii (strain ATCC BAA-1888 / DSM 6725 / KCTC 15123 / Z-1320) (Anaerocellum thermophilum).